A 177-amino-acid chain; its full sequence is NAD(P)H-quinone oxidoreductase subunit 6, chloroplastic (177 aa).

The next 5 membrane-spanning stretches (helical) occupy residues 10-30 (ILLV…VLLT), 32-52 (PIYS…FHIL), 61-81 (AQLL…VMFM), 93-115 (WTVG…IATI), and 152-172 (FFLP…GAIA).

It belongs to the complex I subunit 6 family. As to quaternary structure, NDH is composed of at least 16 different subunits, 5 of which are encoded in the nucleus.

The protein localises to the plastid. It localises to the chloroplast thylakoid membrane. It carries out the reaction a plastoquinone + NADH + (n+1) H(+)(in) = a plastoquinol + NAD(+) + n H(+)(out). It catalyses the reaction a plastoquinone + NADPH + (n+1) H(+)(in) = a plastoquinol + NADP(+) + n H(+)(out). In terms of biological role, NDH shuttles electrons from NAD(P)H:plastoquinone, via FMN and iron-sulfur (Fe-S) centers, to quinones in the photosynthetic chain and possibly in a chloroplast respiratory chain. The immediate electron acceptor for the enzyme in this species is believed to be plastoquinone. Couples the redox reaction to proton translocation, and thus conserves the redox energy in a proton gradient. The polypeptide is NAD(P)H-quinone oxidoreductase subunit 6, chloroplastic (ndhG) (Amborella trichopoda).